Reading from the N-terminus, the 344-residue chain is Phosphate acyltransferase (344 aa).

This sequence belongs to the PlsX family. As to quaternary structure, homodimer. Probably interacts with PlsY.

The protein resides in the cytoplasm. It catalyses the reaction a fatty acyl-[ACP] + phosphate = an acyl phosphate + holo-[ACP]. It functions in the pathway lipid metabolism; phospholipid metabolism. Functionally, catalyzes the reversible formation of acyl-phosphate (acyl-PO(4)) from acyl-[acyl-carrier-protein] (acyl-ACP). This enzyme utilizes acyl-ACP as fatty acyl donor, but not acyl-CoA. This chain is Phosphate acyltransferase, found in Thermosynechococcus vestitus (strain NIES-2133 / IAM M-273 / BP-1).